Reading from the N-terminus, the 348-residue chain is MTKPNGSSLDDHLDAEVARDASLADTAATIRALAAAAIDVSETVGRGALAGDLAAQGEHNSDGDVQKALDVIAHKRFMQALEEAPVAQVASEEAEDVVSLKPGAPLAVAIDPLDGSSNIGVGMVVGTIFGIRPVTLGTDVNASFLTPGTTQTAAGFVVYGPATTFVVTLGNGTRIFTLDRAEKVFRLTHDALQIVPSANEYAINASNVRHWDGPVKSFIEDCLRGTEGPRDRDFNMRWTAALVADAQRVLIRGGVFLYPGDNRKGYAQGRLRLLYETAPIAFLIEQAGGAATDGQARIMERVATKIHERSPLVFGSTEEVECVAKYYDGRQPSAGRSPLFGQRGLMRS.

Mg(2+) contacts are provided by Glu-92, Asp-111, Leu-113, and Asp-114. Substrate-binding positions include 114-117 (DGSS) and Asn-204. Glu-276 serves as a coordination point for Mg(2+).

This sequence belongs to the FBPase class 1 family. In terms of assembly, homotetramer. Requires Mg(2+) as cofactor.

It is found in the cytoplasm. The enzyme catalyses beta-D-fructose 1,6-bisphosphate + H2O = beta-D-fructose 6-phosphate + phosphate. It functions in the pathway carbohydrate biosynthesis; gluconeogenesis. This Methylorubrum populi (strain ATCC BAA-705 / NCIMB 13946 / BJ001) (Methylobacterium populi) protein is Fructose-1,6-bisphosphatase class 1.